A 256-amino-acid polypeptide reads, in one-letter code: Extracellular serine-rich protein ARB_03024 (256 aa).

Residues 1–19 (MVATKSVLSAVALAGVAAA) form the signal peptide. The interval 135–235 (KIVPQSGSPT…TPTASPGAAA (101 aa)) is disordered. Over residues 149–159 (GTLGGSGGSGG) the composition is skewed to gly residues. Low complexity-rich tracts occupy residues 160–204 (SSSS…QSTP) and 215–235 (PSAT…GAAA). Residue Ala233 is the site of GPI-anchor amidated alanine attachment. The propeptide at 234–256 (AAGLKGSAVLAGVVALGAWIGLL) is removed in mature form.

The protein localises to the cell membrane. It localises to the secreted. This chain is Extracellular serine-rich protein ARB_03024, found in Arthroderma benhamiae (strain ATCC MYA-4681 / CBS 112371) (Trichophyton mentagrophytes).